A 184-amino-acid polypeptide reads, in one-letter code: SsrA-binding protein (184 aa).

The segment covering 1–11 (MAAKKSTPTDS) has biased composition (polar residues). Residues 1 to 31 (MAAKKSTPTDSGKSKGKKNKAQKGAGQKGAG) are disordered.

Belongs to the SmpB family.

The protein localises to the cytoplasm. Required for rescue of stalled ribosomes mediated by trans-translation. Binds to transfer-messenger RNA (tmRNA), required for stable association of tmRNA with ribosomes. tmRNA and SmpB together mimic tRNA shape, replacing the anticodon stem-loop with SmpB. tmRNA is encoded by the ssrA gene; the 2 termini fold to resemble tRNA(Ala) and it encodes a 'tag peptide', a short internal open reading frame. During trans-translation Ala-aminoacylated tmRNA acts like a tRNA, entering the A-site of stalled ribosomes, displacing the stalled mRNA. The ribosome then switches to translate the ORF on the tmRNA; the nascent peptide is terminated with the 'tag peptide' encoded by the tmRNA and targeted for degradation. The ribosome is freed to recommence translation, which seems to be the essential function of trans-translation. This is SsrA-binding protein from Corynebacterium jeikeium (strain K411).